The following is a 72-amino-acid chain: Translation initiation factor IF-1 (72 aa).

The 72-residue stretch at 1 to 72 (MSKEDLIEFT…SKGRITFRFK (72 aa)) folds into the S1-like domain.

Belongs to the IF-1 family. In terms of assembly, component of the 30S ribosomal translation pre-initiation complex which assembles on the 30S ribosome in the order IF-2 and IF-3, IF-1 and N-formylmethionyl-tRNA(fMet); mRNA recruitment can occur at any time during PIC assembly.

The protein localises to the cytoplasm. One of the essential components for the initiation of protein synthesis. Stabilizes the binding of IF-2 and IF-3 on the 30S subunit to which N-formylmethionyl-tRNA(fMet) subsequently binds. Helps modulate mRNA selection, yielding the 30S pre-initiation complex (PIC). Upon addition of the 50S ribosomal subunit IF-1, IF-2 and IF-3 are released leaving the mature 70S translation initiation complex. The sequence is that of Translation initiation factor IF-1 from Gluconobacter oxydans (strain 621H) (Gluconobacter suboxydans).